The following is an 89-amino-acid chain: Small ribosomal subunit protein uS15 (89 aa).

Belongs to the universal ribosomal protein uS15 family. Part of the 30S ribosomal subunit. Forms a bridge to the 50S subunit in the 70S ribosome, contacting the 23S rRNA.

One of the primary rRNA binding proteins, it binds directly to 16S rRNA where it helps nucleate assembly of the platform of the 30S subunit by binding and bridging several RNA helices of the 16S rRNA. Functionally, forms an intersubunit bridge (bridge B4) with the 23S rRNA of the 50S subunit in the ribosome. This chain is Small ribosomal subunit protein uS15, found in Bordetella parapertussis (strain 12822 / ATCC BAA-587 / NCTC 13253).